The chain runs to 545 residues: CTP synthase (545 aa).

Residues 1–266 (MTKNYIFITG…DDYICNYFKL (266 aa)) form an amidoligase domain region. CTP is bound at residue Ser14. Residue Ser14 coordinates UTP. ATP is bound by residues 15–20 (SLGKGI) and Asp72. Residues Asp72 and Glu140 each coordinate Mg(2+). CTP contacts are provided by residues 147–149 (DIE), 187–192 (KTKPTQ), and Lys223. UTP is bound by residues 187–192 (KTKPTQ) and Lys223. 239 to 241 (KDV) serves as a coordination point for ATP. The region spanning 291–543 (VIGIIGKYIK…IKSAGKHKKN (253 aa)) is the Glutamine amidotransferase type-1 domain. Gly352 provides a ligand contact to L-glutamine. Cys379 serves as the catalytic Nucleophile; for glutamine hydrolysis. Residues 380–383 (LGMQ), Glu403, and Arg471 each bind L-glutamine. Catalysis depends on residues His516 and Glu518.

It belongs to the CTP synthase family. In terms of assembly, homotetramer.

The catalysed reaction is UTP + L-glutamine + ATP + H2O = CTP + L-glutamate + ADP + phosphate + 2 H(+). The enzyme catalyses L-glutamine + H2O = L-glutamate + NH4(+). It catalyses the reaction UTP + NH4(+) + ATP = CTP + ADP + phosphate + 2 H(+). It participates in pyrimidine metabolism; CTP biosynthesis via de novo pathway; CTP from UDP: step 2/2. Its activity is regulated as follows. Allosterically activated by GTP, when glutamine is the substrate; GTP has no effect on the reaction when ammonia is the substrate. The allosteric effector GTP functions by stabilizing the protein conformation that binds the tetrahedral intermediate(s) formed during glutamine hydrolysis. Inhibited by the product CTP, via allosteric rather than competitive inhibition. In terms of biological role, catalyzes the ATP-dependent amination of UTP to CTP with either L-glutamine or ammonia as the source of nitrogen. Regulates intracellular CTP levels through interactions with the four ribonucleotide triphosphates. This chain is CTP synthase, found in Buchnera aphidicola subsp. Acyrthosiphon pisum (strain Tuc7).